Here is a 28-residue protein sequence, read N- to C-terminus: Dermaseptin-6TR (28 aa).

As to expression, expressed by the skin glands.

The protein localises to the secreted. Its function is as follows. Has antimicrobial activity. The protein is Dermaseptin-6TR of Phyllomedusa trinitatis (Trinidad leaf frog).